The sequence spans 234 residues: Ribose-5-phosphate isomerase A (234 aa).

Substrate contacts are provided by residues 28-31, 83-86, and 96-99; these read TGST, DGAD, and KGGG. Catalysis depends on Glu105, which acts as the Proton acceptor. Lys123 is a substrate binding site.

Belongs to the ribose 5-phosphate isomerase family. Homodimer.

It carries out the reaction aldehydo-D-ribose 5-phosphate = D-ribulose 5-phosphate. Its pathway is carbohydrate degradation; pentose phosphate pathway; D-ribose 5-phosphate from D-ribulose 5-phosphate (non-oxidative stage): step 1/1. Functionally, catalyzes the reversible conversion of ribose-5-phosphate to ribulose 5-phosphate. This chain is Ribose-5-phosphate isomerase A, found in Bartonella quintana (strain Toulouse) (Rochalimaea quintana).